A 1396-amino-acid polypeptide reads, in one-letter code: ABC-type transporter cicA (1396 aa).

The segment at 1-40 (MRLSSEAKIAESGGQPPTAGSRSETGSESTEAESADPKAQ) is disordered. A compositionally biased stretch (low complexity) spans 18–29 (TAGSRSETGSES). Transmembrane regions (helical) follow at residues 142-162 (FLLG…APYL), 191-211 (GFVV…NQFL), and 300-320 (MFHI…LLLV). Residues 143 to 466 (LLGGFCHLIS…LPLVLGQITD (324 aa)) form the ABC transmembrane type-1 1 domain. An N-linked (GlcNAc...) asparagine glycan is attached at Asn321. Helical transmembrane passes span 324-344 (YSAL…TYAV), 409-429 (ILCV…ITYA), and 440-460 (IFSS…LPLV). Over residues 510-533 (AADKEAEKVEKKANPRRTEPKSEA) the composition is skewed to basic and acidic residues. Residues 510-543 (AADKEAEKVEKKANPRRTEPKSEAPTDSAESDEP) form a disordered region. The 227-residue stretch at 525-751 (RRTEPKSEAP…NDLFKQLMST (227 aa)) folds into the ABC transporter 1 domain. ATP is bound at residue 563–570 (GTVGSGKS). A glycan (N-linked (GlcNAc...) asparagine) is linked at Asn604. The segment at 751–787 (TASQDSKEDEEEATEVVEEEAEKQAQQEPTKPAAALM) is disordered. The segment covering 757-771 (KEDEEEATEVVEEEA) has biased composition (acidic residues). Helical transmembrane passes span 816-836 (LAIL…NLWL) and 852-872 (YIGI…IFST). The ABC transmembrane type-1 2 domain maps to 816 to 1093 (LAILFLLAFA…TVRQLAEVEN (278 aa)). Residue Asn880 is glycosylated (N-linked (GlcNAc...) asparagine). A run of 4 helical transmembrane segments spans residues 930 to 947 (MYAI…LIIV), 951 to 970 (YFAI…SNYY), 1036 to 1056 (LSVR…VLVV), and 1065 to 1085 (SISG…QFTV). Asn1096, Asn1150, and Asn1154 each carry an N-linked (GlcNAc...) asparagine glycan. The ABC transporter 2 domain maps to 1131 to 1380 (ITFDNVAMRY…EDGIFRAMCE (250 aa)). ATP is bound at residue 1165–1172 (GRTGAGKS).

This sequence belongs to the ABC transporter superfamily. ABCC family. Conjugate transporter (TC 3.A.1.208) subfamily.

The protein localises to the cell membrane. Its function is as follows. ABC-type transporter; part of the gene cluster that mediates the biosynthesis of cichorine, a phytotoxin active against knapweed, corn, and soybeans. CicA is probably involved in the secretion of cichorine. The polypeptide is ABC-type transporter cicA (Emericella nidulans (strain FGSC A4 / ATCC 38163 / CBS 112.46 / NRRL 194 / M139) (Aspergillus nidulans)).